Here is a 478-residue protein sequence, read N- to C-terminus: Dihydrolipoyl dehydrogenase (478 aa).

Residues 34–49 (EKYIGKEGKVALGGTC), K58, and G122 each bind FAD. C49 and C54 are oxidised to a cystine. Residues 188–192 (GAGVI), E211, V245, and 276–279 (AVGR) each bind NAD(+). Residues D319 and A327 each coordinate FAD. H451 serves as the catalytic Proton acceptor.

It belongs to the class-I pyridine nucleotide-disulfide oxidoreductase family. Homodimer. Requires FAD as cofactor.

Its subcellular location is the cytoplasm. The enzyme catalyses N(6)-[(R)-dihydrolipoyl]-L-lysyl-[protein] + NAD(+) = N(6)-[(R)-lipoyl]-L-lysyl-[protein] + NADH + H(+). The branched-chain alpha-keto dehydrogenase complex catalyzes the overall conversion of alpha-keto acids to acyl-CoA and CO(2). It contains multiple copies of 3 enzymatic components: branched-chain alpha-keto acid decarboxylase (E1), lipoamide acyltransferase (E2) and lipoamide dehydrogenase (E3). Functionally, also acts in the glycine cleavage system. In Pseudomonas aeruginosa (strain ATCC 15692 / DSM 22644 / CIP 104116 / JCM 14847 / LMG 12228 / 1C / PRS 101 / PAO1), this protein is Dihydrolipoyl dehydrogenase (lpdG).